Reading from the N-terminus, the 252-residue chain is Type III pantothenate kinase (252 aa).

Residue 6 to 13 (DVGNTHTT) participates in ATP binding. 104–107 (GADR) provides a ligand contact to substrate. The Proton acceptor role is filled by aspartate 106. Aspartate 126 is a K(+) binding site. Threonine 129 is a binding site for ATP. Threonine 180 contacts substrate.

Belongs to the type III pantothenate kinase family. As to quaternary structure, homodimer. NH4(+) serves as cofactor. The cofactor is K(+).

The protein resides in the cytoplasm. The enzyme catalyses (R)-pantothenate + ATP = (R)-4'-phosphopantothenate + ADP + H(+). It functions in the pathway cofactor biosynthesis; coenzyme A biosynthesis; CoA from (R)-pantothenate: step 1/5. Its function is as follows. Catalyzes the phosphorylation of pantothenate (Pan), the first step in CoA biosynthesis. The protein is Type III pantothenate kinase of Fervidobacterium nodosum (strain ATCC 35602 / DSM 5306 / Rt17-B1).